A 343-amino-acid chain; its full sequence is Protein RecA (343 aa).

66 to 73 contributes to the ATP binding site; sequence GPESSGKT.

Belongs to the RecA family.

The protein resides in the cytoplasm. Functionally, can catalyze the hydrolysis of ATP in the presence of single-stranded DNA, the ATP-dependent uptake of single-stranded DNA by duplex DNA, and the ATP-dependent hybridization of homologous single-stranded DNAs. It interacts with LexA causing its activation and leading to its autocatalytic cleavage. This Nitrosomonas europaea (strain ATCC 19718 / CIP 103999 / KCTC 2705 / NBRC 14298) protein is Protein RecA.